A 318-amino-acid polypeptide reads, in one-letter code: Transaldolase (318 aa).

Lysine 132 acts as the Schiff-base intermediate with substrate in catalysis.

Belongs to the transaldolase family. Type 1 subfamily. In terms of assembly, homodimer.

It is found in the cytoplasm. It catalyses the reaction D-sedoheptulose 7-phosphate + D-glyceraldehyde 3-phosphate = D-erythrose 4-phosphate + beta-D-fructose 6-phosphate. The protein operates within carbohydrate degradation; pentose phosphate pathway; D-glyceraldehyde 3-phosphate and beta-D-fructose 6-phosphate from D-ribose 5-phosphate and D-xylulose 5-phosphate (non-oxidative stage): step 2/3. In terms of biological role, transaldolase is important for the balance of metabolites in the pentose-phosphate pathway. This chain is Transaldolase, found in Shewanella sp. (strain ANA-3).